The following is a 521-amino-acid chain: Sodium/hydrogen exchanger 5 (521 aa).

At M1–A23 the chain is on the cytoplasmic side. A helical membrane pass occupies residues G24–L44. At R45–R48 the chain is on the lumenal side. Residues F49–A69 form a helical membrane-spanning segment. Residues N70–E86 are Cytoplasmic-facing. Positions E87–P107 form an intramembrane region, helical. The Cytoplasmic portion of the chain corresponds to K108–G115. Residues A116–V136 form a helical membrane-spanning segment. Over Y137 to S141 the chain is Lumenal. 2 intramembrane regions (helical) span residues M142–A162 and V166–F186. At G187 to R222 the chain is on the lumenal side. Residues F223–L243 form a helical membrane-spanning segment. At L244 to Y271 the chain is on the cytoplasmic side. The helical transmembrane segment at M272 to M292 threads the bilayer. The Lumenal portion of the chain corresponds to K293–S310. N-linked (GlcNAc...) asparagine glycosylation is present at N299. The chain crosses the membrane as a helical span at residues F311–I331. Residues A332–H340 lie on the Cytoplasmic side of the membrane. Residues V341–G361 form a helical membrane-spanning segment. At C362–K382 the chain is on the lumenal side. The helical transmembrane segment at A383 to L402 threads the bilayer. Residues H403–Q411 are Cytoplasmic-facing. The helical transmembrane segment at I412–T432 threads the bilayer. Topologically, residues G433–E521 are lumenal. The interval G453–G480 is disordered. Residues S467 to G480 are compositionally biased toward low complexity.

The protein belongs to the monovalent cation:proton antiporter 1 (CPA1) transporter (TC 2.A.36) family. In terms of tissue distribution, expressed in roots, leaves, stems, flowers and siliques. Detected at low levels in roots and shoots.

Its subcellular location is the endosome membrane. The protein localises to the golgi apparatus. It localises to the trans-Golgi network membrane. It is found in the golgi stack membrane. The catalysed reaction is Na(+)(in) + H(+)(out) = Na(+)(out) + H(+)(in). The enzyme catalyses K(+)(in) + H(+)(out) = K(+)(out) + H(+)(in). Functionally, involved in trafficking to the vacuole. Required for cell proliferation and cell expansion, but not for cell differentiation. Acts in low affinity electroneutral exchange of protons for cations such as Na(+) or K(+) across membranes. May also exchange Li(+) and Cs(+) with a lower affinity. The chain is Sodium/hydrogen exchanger 5 (NHX5) from Arabidopsis thaliana (Mouse-ear cress).